The sequence spans 393 residues: Branched-chain amino acid aminotransferase 1, mitochondrial (393 aa).

Residues 1-34 constitute a mitochondrion transit peptide; that stretch reads MIHRGLWLHNLVQSYRVGSSSSSSTLFKLVYRYN. Arg138 contributes to the pyridoxal 5'-phosphate binding site. Lys240 acts as the Proton acceptor in catalysis. Lys240 is subject to N6-(pyridoxal phosphate)lysine. Glu276 contributes to the pyridoxal 5'-phosphate binding site.

The protein belongs to the class-IV pyridoxal-phosphate-dependent aminotransferase family. Pyridoxal 5'-phosphate serves as cofactor. In terms of tissue distribution, expressed specifically in lupulin glands.

It is found in the mitochondrion. The enzyme catalyses L-isoleucine + 2-oxoglutarate = (S)-3-methyl-2-oxopentanoate + L-glutamate. It catalyses the reaction L-leucine + 2-oxoglutarate = 4-methyl-2-oxopentanoate + L-glutamate. The catalysed reaction is L-valine + 2-oxoglutarate = 3-methyl-2-oxobutanoate + L-glutamate. Its pathway is amino-acid biosynthesis; L-isoleucine biosynthesis; L-isoleucine from 2-oxobutanoate: step 4/4. The protein operates within amino-acid biosynthesis; L-leucine biosynthesis; L-leucine from 3-methyl-2-oxobutanoate: step 4/4. It participates in amino-acid biosynthesis; L-valine biosynthesis; L-valine from pyruvate: step 4/4. Converts 2-oxo acids to branched-chain amino acids (BCAA). Shows no kinetic preferences corresponding to anabolic or catabolic functions, but likely involved in BCAA catabolism. This is Branched-chain amino acid aminotransferase 1, mitochondrial from Humulus lupulus (European hop).